We begin with the raw amino-acid sequence, 284 residues long: 3-methyl-2-oxobutanoate hydroxymethyltransferase (284 aa).

Residues D52 and D91 each contribute to the Mg(2+) site. 3-methyl-2-oxobutanoate is bound by residues 52 to 53 (DS), D91, and K121. E123 lines the Mg(2+) pocket. E191 (proton acceptor) is an active-site residue.

The protein belongs to the PanB family. As to quaternary structure, homodecamer; pentamer of dimers. It depends on Mg(2+) as a cofactor.

It localises to the cytoplasm. It catalyses the reaction 3-methyl-2-oxobutanoate + (6R)-5,10-methylene-5,6,7,8-tetrahydrofolate + H2O = 2-dehydropantoate + (6S)-5,6,7,8-tetrahydrofolate. Its pathway is cofactor biosynthesis; (R)-pantothenate biosynthesis; (R)-pantoate from 3-methyl-2-oxobutanoate: step 1/2. Catalyzes the reversible reaction in which hydroxymethyl group from 5,10-methylenetetrahydrofolate is transferred onto alpha-ketoisovalerate to form ketopantoate. The polypeptide is 3-methyl-2-oxobutanoate hydroxymethyltransferase (Deinococcus radiodurans (strain ATCC 13939 / DSM 20539 / JCM 16871 / CCUG 27074 / LMG 4051 / NBRC 15346 / NCIMB 9279 / VKM B-1422 / R1)).